Here is a 1019-residue protein sequence, read N- to C-terminus: Alpha-mannosidase At3g26720 (1019 aa).

Residues 1–22 (MAVKCFSLYLILAAIVIGGVTS) form the signal peptide. His-47 and Asp-49 together coordinate Zn(2+). N-linked (GlcNAc...) asparagine glycosylation occurs at Asn-64. Asp-169 lines the Zn(2+) pocket. Residues Asn-278 and Asn-336 are each glycosylated (N-linked (GlcNAc...) asparagine). His-410 provides a ligand contact to Zn(2+). Residues Cys-466 and Cys-474 are joined by a disulfide bond. Residues Asn-470, Asn-638, Asn-730, and Asn-820 are each glycosylated (N-linked (GlcNAc...) asparagine). Residues Cys-824 and Cys-829 are joined by a disulfide bond.

This sequence belongs to the glycosyl hydrolase 38 family. In terms of assembly, homodimer. Zn(2+) is required as a cofactor.

The enzyme catalyses Hydrolysis of terminal, non-reducing alpha-D-mannose residues in alpha-D-mannosides.. Liberates mannose from p-nitrophenyl-alpha-D-mannoside in vitro. The polypeptide is Alpha-mannosidase At3g26720 (Arabidopsis thaliana (Mouse-ear cress)).